The chain runs to 206 residues: MIASLRGTVINIGLSSAVIECNGVGYEVVTTPNTLSQLVRGEEALVLTTMVVREDAMKLYGFIDNESREMFSVLQTVSGLGPRLALACESVLSPLEISQAITNADAKALQRVPGVGKRMADRLIVELKGKVAAFAAGVVDEAGEQISLPNANIASEVVVEQVSQALVGLGFSEKQSDDAVSFVLAADPSLDTSGALRAALAKLSGK.

Positions 1–63 (MIASLRGTVI…EDAMKLYGFI (63 aa)) are domain I. Residues 64 to 142 (DNESREMFSV…AFAAGVVDEA (79 aa)) are domain II. A flexible linker region spans residues 143–153 (GEQISLPNANI). The segment at 154–206 (ASEVVVEQVSQALVGLGFSEKQSDDAVSFVLAADPSLDTSGALRAALAKLSGK) is domain III.

This sequence belongs to the RuvA family. In terms of assembly, homotetramer. Forms an RuvA(8)-RuvB(12)-Holliday junction (HJ) complex. HJ DNA is sandwiched between 2 RuvA tetramers; dsDNA enters through RuvA and exits via RuvB. An RuvB hexamer assembles on each DNA strand where it exits the tetramer. Each RuvB hexamer is contacted by two RuvA subunits (via domain III) on 2 adjacent RuvB subunits; this complex drives branch migration. In the full resolvosome a probable DNA-RuvA(4)-RuvB(12)-RuvC(2) complex forms which resolves the HJ.

The protein resides in the cytoplasm. Functionally, the RuvA-RuvB-RuvC complex processes Holliday junction (HJ) DNA during genetic recombination and DNA repair, while the RuvA-RuvB complex plays an important role in the rescue of blocked DNA replication forks via replication fork reversal (RFR). RuvA specifically binds to HJ cruciform DNA, conferring on it an open structure. The RuvB hexamer acts as an ATP-dependent pump, pulling dsDNA into and through the RuvAB complex. HJ branch migration allows RuvC to scan DNA until it finds its consensus sequence, where it cleaves and resolves the cruciform DNA. The sequence is that of Holliday junction branch migration complex subunit RuvA from Corynebacterium glutamicum (strain R).